The sequence spans 267 residues: 3-methyl-2-oxobutanoate hydroxymethyltransferase (267 aa).

2 residues coordinate Mg(2+): Asp45 and Asp84. Residues 45–46 (DS), Asp84, and Lys113 each bind 3-methyl-2-oxobutanoate. Mg(2+) is bound at residue Glu115. Glu182 serves as the catalytic Proton acceptor.

It belongs to the PanB family. As to quaternary structure, homodecamer; pentamer of dimers. Mg(2+) is required as a cofactor.

The protein localises to the cytoplasm. It catalyses the reaction 3-methyl-2-oxobutanoate + (6R)-5,10-methylene-5,6,7,8-tetrahydrofolate + H2O = 2-dehydropantoate + (6S)-5,6,7,8-tetrahydrofolate. Its pathway is cofactor biosynthesis; coenzyme A biosynthesis. In terms of biological role, catalyzes the reversible reaction in which hydroxymethyl group from 5,10-methylenetetrahydrofolate is transferred onto alpha-ketoisovalerate to form ketopantoate. The protein is 3-methyl-2-oxobutanoate hydroxymethyltransferase of Saccharolobus islandicus (strain Y.G.57.14 / Yellowstone #1) (Sulfolobus islandicus).